Here is a 167-residue protein sequence, read N- to C-terminus: Protein-export protein SecB (167 aa).

The protein belongs to the SecB family. As to quaternary structure, homotetramer, a dimer of dimers. One homotetramer interacts with 1 SecA dimer.

The protein resides in the cytoplasm. One of the proteins required for the normal export of preproteins out of the cell cytoplasm. It is a molecular chaperone that binds to a subset of precursor proteins, maintaining them in a translocation-competent state. It also specifically binds to its receptor SecA. This chain is Protein-export protein SecB, found in Idiomarina loihiensis (strain ATCC BAA-735 / DSM 15497 / L2-TR).